An 843-amino-acid polypeptide reads, in one-letter code: Junction-mediating and -regulatory protein (843 aa).

The interval 49-91 is disordered; it reads RTAQRQRSADKAGGRSPARQQQRDSPAQSPARKAREEPEEGEE. Residues 66–76 are compositionally biased toward polar residues; sequence ARQQQRDSPAQ. Coiled-coil stretches lie at residues 190-225, 359-385, and 416-487; these read SELRHKGYEEGLQRARKRLQELLEKHKTTEVMVDLL, RAKEICLEQKKHALKDQMQSLQGGTEA, and LLLT…AKKA. 3 disordered regions span residues 518–537, 558–632, and 652–688; these read QLKQEKQEDEEERKSTWVSQ, VLKS…ITSE, and STLQPSSLPASPPPPPPPLPPPPPPPLPPSKQDTDTL. Positions 562 to 574 are enriched in basic residues; that stretch reads TRLRFSHERRRST. Composition is skewed to polar residues over residues 582 to 596 and 613 to 630; these read DAPQSLSVSIQTQGL and PETTTQLEDSSLPPNAIT. Over residues 661-680 the composition is skewed to pro residues; that stretch reads ASPPPPPPPLPPPPPPPLPP. The 18-residue stretch at 776–793 folds into the WH2 domain; it reads ESNNILAQIRKGVKLKKV. The segment at 821 to 843 is disordered; the sequence is RIKEASPESEDEEESLPCTDWEN. The span at 827–843 shows a compositional bias: acidic residues; the sequence is PESEDEEESLPCTDWEN.

It belongs to the JMY family.

It is found in the nucleus. It localises to the cytoplasmic vesicle. The protein localises to the cytoplasm. The protein resides in the cytoskeleton. Its subcellular location is the endomembrane system. It is found in the autophagosome membrane. Acts both as a nuclear p53/TP53-cofactor and a cytoplasmic regulator of actin dynamics depending on conditions. In nucleus, acts as a cofactor that increases p53/TP53 response. Increases p53/TP53-dependent transcription and apoptosis, suggesting an important role in p53/TP53 stress response such as DNA damage. In cytoplasm, acts as a nucleation-promoting factor for both branched and unbranched actin filaments. Activates the Arp2/3 complex to induce branched actin filament networks. Also catalyzes actin polymerization in the absence of Arp2/3, creating unbranched filaments. Contributes to cell motility by controlling actin dynamics. In Xenopus tropicalis (Western clawed frog), this protein is Junction-mediating and -regulatory protein (jmy).